Reading from the N-terminus, the 325-residue chain is Beta-ketoacyl-[acyl-carrier-protein] synthase III (325 aa).

Catalysis depends on residues cysteine 116 and histidine 252. An ACP-binding region spans residues 253–257 (QANLR). The active site involves asparagine 282.

This sequence belongs to the thiolase-like superfamily. FabH family. As to quaternary structure, homodimer.

The protein localises to the cytoplasm. It carries out the reaction malonyl-[ACP] + acetyl-CoA + H(+) = 3-oxobutanoyl-[ACP] + CO2 + CoA. The protein operates within lipid metabolism; fatty acid biosynthesis. Its function is as follows. Catalyzes the condensation reaction of fatty acid synthesis by the addition to an acyl acceptor of two carbons from malonyl-ACP. Catalyzes the first condensation reaction which initiates fatty acid synthesis and may therefore play a role in governing the total rate of fatty acid production. Possesses both acetoacetyl-ACP synthase and acetyl transacylase activities. Its substrate specificity determines the biosynthesis of branched-chain and/or straight-chain of fatty acids. This Xanthomonas oryzae pv. oryzae (strain MAFF 311018) protein is Beta-ketoacyl-[acyl-carrier-protein] synthase III.